Here is a 648-residue protein sequence, read N- to C-terminus: 1-deoxy-D-xylulose-5-phosphate synthase 1 (648 aa).

Thiamine diphosphate-binding positions include His82 and 123 to 125 (AHS). Asp154 is a Mg(2+) binding site. Thiamine diphosphate is bound by residues 155 to 156 (GS), Asn183, Tyr292, and Glu374. Residue Asn183 coordinates Mg(2+).

This sequence belongs to the transketolase family. DXPS subfamily. Homodimer. The cofactor is Mg(2+). Thiamine diphosphate is required as a cofactor.

The enzyme catalyses D-glyceraldehyde 3-phosphate + pyruvate + H(+) = 1-deoxy-D-xylulose 5-phosphate + CO2. It functions in the pathway metabolic intermediate biosynthesis; 1-deoxy-D-xylulose 5-phosphate biosynthesis; 1-deoxy-D-xylulose 5-phosphate from D-glyceraldehyde 3-phosphate and pyruvate: step 1/1. Functionally, catalyzes the acyloin condensation reaction between C atoms 2 and 3 of pyruvate and glyceraldehyde 3-phosphate to yield 1-deoxy-D-xylulose-5-phosphate (DXP). This is 1-deoxy-D-xylulose-5-phosphate synthase 1 from Cereibacter sphaeroides (strain ATCC 17023 / DSM 158 / JCM 6121 / CCUG 31486 / LMG 2827 / NBRC 12203 / NCIMB 8253 / ATH 2.4.1.) (Rhodobacter sphaeroides).